We begin with the raw amino-acid sequence, 506 residues long: UBX domain-containing protein 4 (506 aa).

An interaction with UBQLN1 region spans residues 1–199 (MLWFQGAIPA…PAEDLTVRVE (199 aa)). Residues 1-411 (MLWFQGAIPA…VPSSSGDIWT (411 aa)) lie on the Cytoplasmic side of the membrane. Polar residues-rich tracts occupy residues 114-136 (SLKG…TPSA) and 177-189 (SLSQ…SNQR). Residues 114–193 (SLKGETSVTN…GCSNQRPAED (80 aa)) are disordered. The UBX domain maps to 313 to 391 (DRSTIARIQF…ELAPSASVVL (79 aa)). Residues 412–432 (LLGTVLYPFLAIWRLISNFLF) lie within the membrane without spanning it. Residues 433-506 (SNPPPAQTSA…TWNGNSTQQM (74 aa)) lie on the Cytoplasmic side of the membrane. The interval 437-506 (PAQTSARATS…TWNGNSTQQM (70 aa)) is disordered. The segment covering 444 to 456 (ATSTEPSNSASSS) has biased composition (low complexity). The segment covering 457-489 (KSEKREPVRKRVLEKRGEDFKKEGKIYRLRTQD) has biased composition (basic and acidic residues). A Phosphothreonine modification is found at T487. Residues 496–506 (NTWNGNSTQQM) are compositionally biased toward polar residues.

In terms of assembly, directly interacts with VCP. Interacts with UBQLN1. Forms a complex with VCP and UBQLN1.

The protein resides in the endoplasmic reticulum membrane. It is found in the nucleus envelope. Involved in endoplasmic reticulum-associated protein degradation (ERAD). Acts as a platform to recruit both UBQLN1 and VCP to the ER during ERAD. This chain is UBX domain-containing protein 4 (Ubxn4), found in Rattus norvegicus (Rat).